Consider the following 209-residue polypeptide: Neurotrophin-4 (209 aa).

The N-terminal stretch at 1–21 (MLPRHSCSLLLFLFLLPSVPM) is a signal peptide. The propeptide occupies 22–79 (EPHPPSSTLPPFLAPEWDLLSPRVALSRGAPAGPPLLFLLEAGAYGEPAGAPANRSRR). An N-linked (GlcNAc...) asparagine glycan is attached at asparagine 75. 3 cysteine pairs are disulfide-bonded: cysteine 96/cysteine 169, cysteine 140/cysteine 198, and cysteine 157/cysteine 200.

It belongs to the NGF-beta family.

It is found in the secreted. Its function is as follows. Target-derived survival factor for peripheral sensory sympathetic neurons. May promote ameloblast differentiation and subsequent reduction in proliferation of ameloblasts. This is Neurotrophin-4 (Ntf4) from Mus musculus (Mouse).